Reading from the N-terminus, the 183-residue chain is Orotate phosphoribosyltransferase (183 aa).

5-phospho-alpha-D-ribose 1-diphosphate is bound by residues Arg-21, Lys-88, and 112–120 (EDVVTTGES). Positions 116 and 144 each coordinate orotate.

It belongs to the purine/pyrimidine phosphoribosyltransferase family. PyrE subfamily. As to quaternary structure, homodimer. Mg(2+) is required as a cofactor.

It catalyses the reaction orotidine 5'-phosphate + diphosphate = orotate + 5-phospho-alpha-D-ribose 1-diphosphate. It participates in pyrimidine metabolism; UMP biosynthesis via de novo pathway; UMP from orotate: step 1/2. Catalyzes the transfer of a ribosyl phosphate group from 5-phosphoribose 1-diphosphate to orotate, leading to the formation of orotidine monophosphate (OMP). The polypeptide is Orotate phosphoribosyltransferase (Thermus thermophilus (strain ATCC BAA-163 / DSM 7039 / HB27)).